The primary structure comprises 79 residues: Putative Fis-like DNA-binding protein (79 aa).

Positions 55–74 (QSKASVMLGLNRNTLRKKLI) form a DNA-binding region, H-T-H motif.

It belongs to the transcriptional regulatory Fis family.

This is Putative Fis-like DNA-binding protein from Neisseria meningitidis serogroup A / serotype 4A (strain DSM 15465 / Z2491).